Reading from the N-terminus, the 119-residue chain is Large ribosomal subunit protein uL22 (119 aa).

Belongs to the universal ribosomal protein uL22 family. As to quaternary structure, part of the 50S ribosomal subunit.

In terms of biological role, this protein binds specifically to 23S rRNA; its binding is stimulated by other ribosomal proteins, e.g. L4, L17, and L20. It is important during the early stages of 50S assembly. It makes multiple contacts with different domains of the 23S rRNA in the assembled 50S subunit and ribosome. Its function is as follows. The globular domain of the protein is located near the polypeptide exit tunnel on the outside of the subunit, while an extended beta-hairpin is found that lines the wall of the exit tunnel in the center of the 70S ribosome. The chain is Large ribosomal subunit protein uL22 from Rhodopirellula baltica (strain DSM 10527 / NCIMB 13988 / SH1).